A 462-amino-acid chain; its full sequence is UDP-N-acetylmuramate--L-alanine ligase (462 aa).

ATP is bound at residue 119-125; sequence GTHGKTT.

It belongs to the MurCDEF family.

It localises to the cytoplasm. The enzyme catalyses UDP-N-acetyl-alpha-D-muramate + L-alanine + ATP = UDP-N-acetyl-alpha-D-muramoyl-L-alanine + ADP + phosphate + H(+). It functions in the pathway cell wall biogenesis; peptidoglycan biosynthesis. Its function is as follows. Cell wall formation. The sequence is that of UDP-N-acetylmuramate--L-alanine ligase from Parabacteroides distasonis (strain ATCC 8503 / DSM 20701 / CIP 104284 / JCM 5825 / NCTC 11152).